The primary structure comprises 346 residues: Isopentenyl-diphosphate delta-isomerase (346 aa).

12–13 (RK) contributes to the substrate binding site. FMN contacts are provided by residues 67–69 (ALT), Ser-97, and Asn-126. Residue 97–99 (SQR) participates in substrate binding. Residue Gln-156 coordinates substrate. Mg(2+) is bound at residue Glu-157. FMN is bound by residues Lys-188, Thr-218, 263–265 (GIR), and 284–285 (AG).

The protein belongs to the IPP isomerase type 2 family. In terms of assembly, homooctamer. Dimer of tetramers. FMN is required as a cofactor. The cofactor is NADPH. Mg(2+) serves as cofactor.

Its subcellular location is the cytoplasm. It catalyses the reaction isopentenyl diphosphate = dimethylallyl diphosphate. In terms of biological role, involved in the biosynthesis of isoprenoids. Catalyzes the 1,3-allylic rearrangement of the homoallylic substrate isopentenyl (IPP) to its allylic isomer, dimethylallyl diphosphate (DMAPP). The polypeptide is Isopentenyl-diphosphate delta-isomerase (Moorella thermoacetica (strain ATCC 39073 / JCM 9320)).